The primary structure comprises 403 residues: S-adenosylmethionine synthase (403 aa).

Residue His17 coordinates ATP. A Mg(2+)-binding site is contributed by Asp19. Residue Glu45 coordinates K(+). Residues Glu58 and Gln104 each coordinate L-methionine. Residues 104-114 (QSPDIAQGVDT) are flexible loop. ATP contacts are provided by residues 179–181 (DGK), 250–251 (KF), Asp259, 265–266 (RK), Ala282, and Lys286. Asp259 is a binding site for L-methionine. L-methionine is bound at residue Lys290.

The protein belongs to the AdoMet synthase family. Homotetramer; dimer of dimers. It depends on Mg(2+) as a cofactor. K(+) serves as cofactor.

It is found in the cytoplasm. It carries out the reaction L-methionine + ATP + H2O = S-adenosyl-L-methionine + phosphate + diphosphate. It participates in amino-acid biosynthesis; S-adenosyl-L-methionine biosynthesis; S-adenosyl-L-methionine from L-methionine: step 1/1. Its function is as follows. Catalyzes the formation of S-adenosylmethionine (AdoMet) from methionine and ATP. The overall synthetic reaction is composed of two sequential steps, AdoMet formation and the subsequent tripolyphosphate hydrolysis which occurs prior to release of AdoMet from the enzyme. This is S-adenosylmethionine synthase from Mycobacterium bovis (strain ATCC BAA-935 / AF2122/97).